We begin with the raw amino-acid sequence, 508 residues long: Lysine--tRNA ligase (508 aa).

Glu-418 and Glu-425 together coordinate Mg(2+).

The protein belongs to the class-II aminoacyl-tRNA synthetase family. Homodimer. It depends on Mg(2+) as a cofactor.

It localises to the cytoplasm. The catalysed reaction is tRNA(Lys) + L-lysine + ATP = L-lysyl-tRNA(Lys) + AMP + diphosphate. The chain is Lysine--tRNA ligase from Burkholderia cenocepacia (strain HI2424).